Here is a 239-residue protein sequence, read N- to C-terminus: 1-(5-phosphoribosyl)-5-[(5-phosphoribosylamino)methylideneamino] imidazole-4-carboxamide isomerase (239 aa).

The active-site Proton acceptor is Asp-8. The Proton donor role is filled by Asp-129.

Belongs to the HisA/HisF family.

The protein localises to the cytoplasm. It catalyses the reaction 1-(5-phospho-beta-D-ribosyl)-5-[(5-phospho-beta-D-ribosylamino)methylideneamino]imidazole-4-carboxamide = 5-[(5-phospho-1-deoxy-D-ribulos-1-ylimino)methylamino]-1-(5-phospho-beta-D-ribosyl)imidazole-4-carboxamide. Its pathway is amino-acid biosynthesis; L-histidine biosynthesis; L-histidine from 5-phospho-alpha-D-ribose 1-diphosphate: step 4/9. The chain is 1-(5-phosphoribosyl)-5-[(5-phosphoribosylamino)methylideneamino] imidazole-4-carboxamide isomerase from Bacillus anthracis (strain A0248).